The chain runs to 183 residues: MLTMKDIIRDGHPTLRQKAAELELPLTKEEKETLIAMREFLVNSQDEEIAKRYGLRSGVGLAAPQINISKRMIAVLIPDDGSGKSYDYMLVNPKIVSHSVQEAYLPTGEGCLSVDDNVAGLVHRHNRITIKAKDIEGNDIQLRLKGYPAIVFQHEIDHLNGVMFYDHIDKDHPLQPHTDAVEV.

Residues C111 and H154 each coordinate Fe cation. Residue E155 is part of the active site. H158 contacts Fe cation.

Belongs to the polypeptide deformylase family. Fe(2+) serves as cofactor.

It carries out the reaction N-terminal N-formyl-L-methionyl-[peptide] + H2O = N-terminal L-methionyl-[peptide] + formate. Its function is as follows. Removes the formyl group from the N-terminal Met of newly synthesized proteins. Requires at least a dipeptide for an efficient rate of reaction. N-terminal L-methionine is a prerequisite for activity but the enzyme has broad specificity at other positions. The sequence is that of Peptide deformylase from Staphylococcus aureus (strain COL).